The primary structure comprises 199 residues: Holliday junction branch migration complex subunit RuvA (199 aa).

Residues 1 to 64 (MIARLTGMLA…EDAISLFGFR (64 aa)) are domain I. A domain II region spans residues 65–143 (TVAEKEFFQV…KMDVAPSTKE (79 aa)). Positions 144–154 (AAPSEAPPEVA) are flexible linker. The domain III stretch occupies residues 154 to 199 (ADDVASALVNLGYKEAVVRKVLAEMAIESGASTEAVLRQALKILMK).

This sequence belongs to the RuvA family. As to quaternary structure, homotetramer. Forms an RuvA(8)-RuvB(12)-Holliday junction (HJ) complex. HJ DNA is sandwiched between 2 RuvA tetramers; dsDNA enters through RuvA and exits via RuvB. An RuvB hexamer assembles on each DNA strand where it exits the tetramer. Each RuvB hexamer is contacted by two RuvA subunits (via domain III) on 2 adjacent RuvB subunits; this complex drives branch migration. In the full resolvosome a probable DNA-RuvA(4)-RuvB(12)-RuvC(2) complex forms which resolves the HJ.

It is found in the cytoplasm. Its function is as follows. The RuvA-RuvB-RuvC complex processes Holliday junction (HJ) DNA during genetic recombination and DNA repair, while the RuvA-RuvB complex plays an important role in the rescue of blocked DNA replication forks via replication fork reversal (RFR). RuvA specifically binds to HJ cruciform DNA, conferring on it an open structure. The RuvB hexamer acts as an ATP-dependent pump, pulling dsDNA into and through the RuvAB complex. HJ branch migration allows RuvC to scan DNA until it finds its consensus sequence, where it cleaves and resolves the cruciform DNA. This Geobacter metallireducens (strain ATCC 53774 / DSM 7210 / GS-15) protein is Holliday junction branch migration complex subunit RuvA.